A 490-amino-acid polypeptide reads, in one-letter code: UDP-N-acetylmuramate--L-alanine ligase (490 aa).

133 to 139 (GTHGKTS) serves as a coordination point for ATP.

Belongs to the MurCDEF family.

The protein localises to the cytoplasm. It carries out the reaction UDP-N-acetyl-alpha-D-muramate + L-alanine + ATP = UDP-N-acetyl-alpha-D-muramoyl-L-alanine + ADP + phosphate + H(+). The protein operates within cell wall biogenesis; peptidoglycan biosynthesis. Functionally, cell wall formation. This chain is UDP-N-acetylmuramate--L-alanine ligase, found in Saccharopolyspora erythraea (strain ATCC 11635 / DSM 40517 / JCM 4748 / NBRC 13426 / NCIMB 8594 / NRRL 2338).